The sequence spans 506 residues: Anaerobic nitric oxide reductase transcription regulator NorR (506 aa).

Asp-57 bears the 4-aspartylphosphate mark. Positions Met-187–Val-416 constitute a Sigma-54 factor interaction domain. ATP contacts are provided by residues Gly-215–Glu-222 and Ala-278–Glu-287. Positions Trp-481 to Lys-500 form a DNA-binding region, H-T-H motif.

Its pathway is nitrogen metabolism; nitric oxide reduction. Required for the expression of anaerobic nitric oxide (NO) reductase, acts as a transcriptional activator for at least the norVW operon. Activation also requires sigma-54. The protein is Anaerobic nitric oxide reductase transcription regulator NorR of Salmonella dublin (strain CT_02021853).